We begin with the raw amino-acid sequence, 1336 residues long: Lysine-specific demethylase 2B (1336 aa).

The tract at residues 1 to 25 (MAGPQMGGSAEDHPPRKRHAAEKQK) is disordered. The segment covering 15–25 (PRKRHAAEKQK) has biased composition (basic residues). Residue serine 57 is modified to Phosphoserine. Residues 178–346 (FSHTKLEHLV…MQLRIYEIED (169 aa)) enclose the JmjC domain. Threonine 239 lines the substrate pocket. Fe cation-binding residues include histidine 242 and aspartate 244. Lysine 259 contacts substrate. Residue histidine 314 coordinates Fe cation. Over residues 410-430 (MEEEACDQQPQEEEEKDEEGE) the composition is skewed to acidic residues. The disordered stretch occupies residues 410 to 465 (MEEEACDQQPQEEEEKDEEGEGRDRAPKPPTDGSTSPTSTPSEDQEALGKKPKAPA). Residues 440 to 451 (TDGSTSPTSTPS) show a composition bias toward low complexity. Phosphoserine occurs at positions 474 and 477. Residue threonine 493 is modified to Phosphothreonine. A Phosphoserine modification is found at serine 497. Residues 606–652 (ARRRRTRCRKCEACLRTECGECHFCKDMKKFGGPGRMKQSCIMRQCI) form a CXXC-type zinc finger. Zn(2+) is bound by residues cysteine 613, cysteine 616, cysteine 619, cysteine 624, cysteine 627, cysteine 630, cysteine 646, cysteine 651, cysteine 662, cysteine 665, cysteine 688, cysteine 691, histidine 696, cysteine 699, cysteine 719, and cysteine 722. The PHD-type zinc-finger motif lies at 659-725 (TAVCLVCGEA…CWECPKCNHA (67 aa)). Disordered stretches follow at residues 727–843 (KTGK…SLSP) and 855–1034 (QLKP…SPPK). The span at 749 to 799 (KEQKMNRDNKEGQEPAKRRSECEEAPRRRSDEHSKKVPPDGLLRRKSDDVH) shows a compositional bias: basic and acidic residues. A compositionally biased stretch (low complexity) spans 819–843 (SSLQTSPGSSSHLSPRPPLGSSLSP). Residues lysine 857 and lysine 890 each participate in a glycyl lysine isopeptide (Lys-Gly) (interchain with G-Cter in SUMO2) cross-link. Residues 902–911 (PKTRESDHSR) are compositionally biased toward basic and acidic residues. Over residues 932-941 (KVKMRRKRRL) the composition is skewed to basic residues. Residues 942–960 (PNKELSRELSKELNHEIQR) show a composition bias toward basic and acidic residues. Positions 943 to 971 (NKELSRELSKELNHEIQRTENSLANENQQ) form a coiled coil. Residue serine 951 is modified to Phosphoserine. Residues 961–971 (TENSLANENQQ) show a composition bias toward polar residues. Residues serine 975, serine 979, serine 1018, and serine 1031 each carry the phosphoserine modification. Residues 1014 to 1024 (PSLRSPPRVIS) are compositionally biased toward low complexity. The F-box domain maps to 1059 to 1105 (DGAAHVMHREVWMAVFSYLSHQDLCVCMRVCRTWNRWCCDKRLWTRI). LRR repeat units lie at residues 1093-1120 (NRWCCDKRLWTRIDLNHCKSITPLMLSG), 1133-1154 (WTNISKKQLSWLINRLPGLRDL), 1156-1182 (LSGCSWIAVSALCSSSCPLLRTLDVQW), 1222-1247 (GLDITDASLRLIIRHMPLLSKLHLSY), 1248-1277 (CNHVTDQSINLLTAVGTTTRDSLTEINLSD), 1278-1302 (CNKVTDQCLSFFKRCGNICHIDLRY), and 1303-1336 (CKQVTKEGCEQFIAEMSVSVQFGQVEEKLLQKLS).

Belongs to the JHDM1 histone demethylase family. In terms of assembly, interacts with SKP1, forming heterodimers. The heterodimeric KDM2B-SKP1 complex interacts with the PCGF1-BCORL1 heterodimeric complex to form a homotetrameric polycomb repression complex 1 (PRC1.1). Directly interacts with CUL1. The SKP1-KDM2B complex interacts with UBB. It depends on Fe(2+) as a cofactor.

The protein resides in the nucleus. Its subcellular location is the nucleolus. It localises to the chromosome. The enzyme catalyses N(6),N(6)-dimethyl-L-lysyl(36)-[histone H3] + 2 2-oxoglutarate + 2 O2 = L-lysyl(36)-[histone H3] + 2 formaldehyde + 2 succinate + 2 CO2. Its activity is regulated as follows. Histone demethylase activity is inhibited by fumarate. Functionally, histone demethylase that demethylates 'Lys-4' and 'Lys-36' of histone H3, thereby playing a central role in histone code. Preferentially demethylates trimethylated H3 'Lys-4' and dimethylated H3 'Lys-36' residue while it has weak or no activity for mono- and tri-methylated H3 'Lys-36'. Preferentially binds the transcribed region of ribosomal RNA and represses the transcription of ribosomal RNA genes which inhibits cell growth and proliferation. May also serve as a substrate-recognition component of the SCF (SKP1-CUL1-F-box protein)-type E3 ubiquitin ligase complex. In Homo sapiens (Human), this protein is Lysine-specific demethylase 2B (KDM2B).